We begin with the raw amino-acid sequence, 88 residues long: Small ribosomal subunit protein uS17 (88 aa).

This sequence belongs to the universal ribosomal protein uS17 family. In terms of assembly, part of the 30S ribosomal subunit.

In terms of biological role, one of the primary rRNA binding proteins, it binds specifically to the 5'-end of 16S ribosomal RNA. This chain is Small ribosomal subunit protein uS17, found in Pseudomonas putida (strain ATCC 700007 / DSM 6899 / JCM 31910 / BCRC 17059 / LMG 24140 / F1).